Here is a 277-residue protein sequence, read N- to C-terminus: Large ribosomal subunit protein uL2 (277 aa).

A disordered region spans residues 222–277 (GVAMNPVDHPHGGGEGRTSGGRHPVTPWGKPTKGKKTRSNKATDKFIMRSRHQRKK).

Belongs to the universal ribosomal protein uL2 family. In terms of assembly, part of the 50S ribosomal subunit. Forms a bridge to the 30S subunit in the 70S ribosome.

In terms of biological role, one of the primary rRNA binding proteins. Required for association of the 30S and 50S subunits to form the 70S ribosome, for tRNA binding and peptide bond formation. It has been suggested to have peptidyltransferase activity; this is somewhat controversial. Makes several contacts with the 16S rRNA in the 70S ribosome. The protein is Large ribosomal subunit protein uL2 of Brucella abortus (strain S19).